We begin with the raw amino-acid sequence, 100 residues long: Small ribosomal subunit protein uS14c (100 aa).

It belongs to the universal ribosomal protein uS14 family. Part of the 30S ribosomal subunit.

The protein resides in the plastid. The protein localises to the chloroplast. In terms of biological role, binds 16S rRNA, required for the assembly of 30S particles. The polypeptide is Small ribosomal subunit protein uS14c (Zygnema circumcarinatum (Green alga)).